The following is a 251-amino-acid chain: Carbohydrate deacetylase (251 aa).

Positions 59 and 122 each coordinate Mg(2+).

This sequence belongs to the YdjC deacetylase family. As to quaternary structure, homodimer. Mg(2+) is required as a cofactor.

Functionally, probably catalyzes the deacetylation of acetylated carbohydrates an important step in the degradation of oligosaccharides. The polypeptide is Carbohydrate deacetylase (Vibrio campbellii (strain ATCC BAA-1116)).